The following is a 277-amino-acid chain: Phosphate import ATP-binding protein PstB (277 aa).

Positions 31–272 constitute an ABC transporter domain; that stretch reads IEVPGLSLFY…PAKKQTEDYI (242 aa). Position 63–70 (63–70) interacts with ATP; it reads GPSGCGKS.

Belongs to the ABC transporter superfamily. Phosphate importer (TC 3.A.1.7) family. In terms of assembly, the complex is composed of two ATP-binding proteins (PstB), two transmembrane proteins (PstC and PstA) and a solute-binding protein (PstS).

The protein localises to the cell inner membrane. It carries out the reaction phosphate(out) + ATP + H2O = ADP + 2 phosphate(in) + H(+). In terms of biological role, part of the ABC transporter complex PstSACB involved in phosphate import. Responsible for energy coupling to the transport system. The sequence is that of Phosphate import ATP-binding protein PstB from Pseudomonas putida (Arthrobacter siderocapsulatus).